A 304-amino-acid chain; its full sequence is Foldase protein PrsA (304 aa).

Residues 1–19 (MKKKLLSVAAVASVFTLAA) form the signal peptide. C20 carries N-palmitoyl cysteine lipidation. Residue C20 is the site of S-diacylglycerol cysteine attachment. The PpiC domain maps to 140–231 (KVEVKASHIL…FGYHIIKVTD (92 aa)). Residues 285 to 304 (FDLDKQEQQQMQQQMQQQQQ) form a disordered region. Residues 292–304 (QQQMQQQMQQQQQ) are compositionally biased toward low complexity.

This sequence belongs to the PrsA family.

The protein resides in the cell membrane. The catalysed reaction is [protein]-peptidylproline (omega=180) = [protein]-peptidylproline (omega=0). Its function is as follows. Plays a major role in protein secretion by helping the post-translocational extracellular folding of several secreted proteins. This Exiguobacterium sibiricum (strain DSM 17290 / CCUG 55495 / CIP 109462 / JCM 13490 / 255-15) protein is Foldase protein PrsA.